The following is a 1039-amino-acid chain: uncharacterized protein (1039 aa).

Positions 1-28 (MKLFPRTLLKILVVSFILNFGVTSKSYA) are cleaved as a signal peptide. 6 helical membrane-spanning segments follow: residues 326–346 (IVTA…LLAG), 354–374 (YINF…LNIT), 387–407 (MIQW…SWVM), 491–511 (MLVS…AFMV), 517–537 (CMVS…MFLF), and 551–571 (MISF…MFSV). Residues 654–680 (KPNQTCDPKAADADTKCNPKPGDSSTS) are disordered. Residues 710–730 (IKDILLALVTACFTLYLMYNF) form a helical membrane-spanning segment. Disordered regions lie at residues 799–875 (LVKG…PTTV), 917–949 (IKEA…LDEN), and 1004–1039 (LYRS…DENP). The segment covering 802 to 811 (GSGGGGGSEG) has biased composition (gly residues). The segment covering 812–836 (GDSFTSGGLRETSSTAATPSSALSS) has biased composition (low complexity). Positions 843-861 (GTATPSSASEEMLDTSFSN) are enriched in polar residues. 2 stretches are compositionally biased toward basic and acidic residues: residues 917-939 (IKEA…HTTE) and 1004-1033 (LYRS…KIDS).

Belongs to the TrbL/VirB6 family.

It localises to the cell membrane. This is an uncharacterized protein from Rickettsia bellii (strain RML369-C).